The primary structure comprises 118 residues: V-type proton ATPase subunit G 2 (118 aa).

The interval 23 to 90 (ADARKRKARR…VQGMQSSQQR (68 aa)) is disordered. The span at 35-55 (QAKEEAQMEVEQYRREREQEF) shows a compositional bias: basic and acidic residues. Composition is skewed to polar residues over residues 56–69 (QSKQQAAMGSQGNL) and 78–89 (RRQVQGMQSSQQ).

The protein belongs to the V-ATPase G subunit family. V-ATPase is a heteromultimeric enzyme made up of two complexes: the ATP-hydrolytic V1 complex and the proton translocation V0 complex. The V1 complex consists of three catalytic AB heterodimers that form a heterohexamer, three peripheral stalks each consisting of EG heterodimers, one central rotor including subunits D and F, and the regulatory subunits C and H. The proton translocation complex V0 consists of the proton transport subunit a, a ring of proteolipid subunits c9c'', rotary subunit d, subunits e and f, and the accessory subunits ATP6AP1/Ac45 and ATP6AP2/PRR.

It is found in the melanosome. The protein resides in the cytoplasmic vesicle. The protein localises to the clathrin-coated vesicle membrane. In terms of biological role, subunit of the V1 complex of vacuolar(H+)-ATPase (V-ATPase), a multisubunit enzyme composed of a peripheral complex (V1) that hydrolyzes ATP and a membrane integral complex (V0) that translocates protons. V-ATPase is responsible for acidifying and maintaining the pH of intracellular compartments and in some cell types, is targeted to the plasma membrane, where it is responsible for acidifying the extracellular environment. The chain is V-type proton ATPase subunit G 2 (ATP6V1G2) from Macaca mulatta (Rhesus macaque).